A 431-amino-acid polypeptide reads, in one-letter code: MTAKWEKLEGNEGVLTVDVESAKVDEALDKAFKKVVKKVNVPGFRKGKVPRKIFERQFGVEALYQDALDILLPEAYAAAIDETGIEPVDRPEIDIEQMEQGNNLIFKATVTVKPEVQLGDYKGLEFEEKDTTVSDEDVEQELKSLQERQAELVVVEEEAIQEGDTAVLDFEGFVDGEAFEGGKAENYSLEIGSGQFIPGFEDQLVGLKAGEEKDVEVTFPEEYHAEELAGKPATFKVKIHDVKRKELPELDDEFAKDVDEEVESLDELKKKLREKLEKDRAHEADHEKRDTLIQKASENATIDIPEAMINTELDRMTQEFEQRLQMQGMNLEMYFQFSGQTQEQLREQMKEDAEKRVRVNLTLEAIANQENLEASDEDVEKELEKMAEMYQRSVDEIKSIFATQGGTDGIKADLKIQKAVDFLVEHSKAVS.

Residues 163-248 (GDTAVLDFEG…IHDVKRKELP (86 aa)) form the PPIase FKBP-type domain.

It belongs to the FKBP-type PPIase family. Tig subfamily.

Its subcellular location is the cytoplasm. The enzyme catalyses [protein]-peptidylproline (omega=180) = [protein]-peptidylproline (omega=0). Functionally, involved in protein export. Acts as a chaperone by maintaining the newly synthesized protein in an open conformation. Functions as a peptidyl-prolyl cis-trans isomerase. The chain is Trigger factor (tig) from Halalkalibacterium halodurans (strain ATCC BAA-125 / DSM 18197 / FERM 7344 / JCM 9153 / C-125) (Bacillus halodurans).